The chain runs to 447 residues: Tubulin beta-2 chain (447 aa).

Residues Gln-11, Glu-69, Ser-138, Gly-142, Thr-143, Gly-144, Asn-204, and Asn-226 each coordinate GTP. Mg(2+) is bound at residue Glu-69. The tract at residues 419-447 (VSEYQQYQDATADDEGEYEDEEEEADLQD) is disordered. Over residues 429-447 (TADDEGEYEDEEEEADLQD) the composition is skewed to acidic residues.

The protein belongs to the tubulin family. In terms of assembly, dimer of alpha and beta chains. A typical microtubule is a hollow water-filled tube with an outer diameter of 25 nm and an inner diameter of 15 nM. Alpha-beta heterodimers associate head-to-tail to form protofilaments running lengthwise along the microtubule wall with the beta-tubulin subunit facing the microtubule plus end conferring a structural polarity. Microtubules usually have 13 protofilaments but different protofilament numbers can be found in some organisms and specialized cells. Mg(2+) is required as a cofactor. In terms of tissue distribution, expressed in leaf sheaths and suspension cultured cells.

It is found in the cytoplasm. The protein localises to the cytoskeleton. Tubulin is the major constituent of microtubules, a cylinder consisting of laterally associated linear protofilaments composed of alpha- and beta-tubulin heterodimers. Microtubules grow by the addition of GTP-tubulin dimers to the microtubule end, where a stabilizing cap forms. Below the cap, tubulin dimers are in GDP-bound state, owing to GTPase activity of alpha-tubulin. In Oryza sativa subsp. japonica (Rice), this protein is Tubulin beta-2 chain (TUBB2).